The sequence spans 663 residues: DNA topoisomerase 4 subunit B (663 aa).

ATP is bound by residues Tyr-21, Asn-61, Asp-88, 130–136 (GLHGVGI), and Lys-360. The region spanning 440–554 (TELFIVEGDS…EGHLYLAKPP (115 aa)) is the Toprim domain. Positions 446, 519, and 521 each coordinate Mg(2+).

Belongs to the type II topoisomerase family. ParE type 1 subfamily. As to quaternary structure, heterotetramer composed of ParC and ParE. Mg(2+) serves as cofactor. The cofactor is Mn(2+). Ca(2+) is required as a cofactor.

The catalysed reaction is ATP-dependent breakage, passage and rejoining of double-stranded DNA.. Its function is as follows. Topoisomerase IV is essential for chromosome segregation. It relaxes supercoiled DNA. Performs the decatenation events required during the replication of a circular DNA molecule. The polypeptide is DNA topoisomerase 4 subunit B (Rickettsia typhi (strain ATCC VR-144 / Wilmington)).